Reading from the N-terminus, the 406-residue chain is 5-methylthioadenosine/S-adenosylhomocysteine deaminase (406 aa).

Residues H55 and H57 each contribute to the Zn(2+) site. Residues E84, R136, R148, and H173 each contribute to the substrate site. Residue H200 coordinates Zn(2+). Positions 203 and 279 each coordinate substrate. Position 279 (D279) interacts with Zn(2+).

This sequence belongs to the metallo-dependent hydrolases superfamily. MTA/SAH deaminase family. Zn(2+) is required as a cofactor.

It catalyses the reaction S-adenosyl-L-homocysteine + H2O + H(+) = S-inosyl-L-homocysteine + NH4(+). The enzyme catalyses S-methyl-5'-thioadenosine + H2O + H(+) = S-methyl-5'-thioinosine + NH4(+). Catalyzes the deamination of 5-methylthioadenosine and S-adenosyl-L-homocysteine into 5-methylthioinosine and S-inosyl-L-homocysteine, respectively. Is also able to deaminate adenosine. Adenosine-5-monophosphate (AMP) and S-adenosyl-L-methionine (SAM) are not enzyme substrates. The chain is 5-methylthioadenosine/S-adenosylhomocysteine deaminase (mtaD) from Thermotoga maritima (strain ATCC 43589 / DSM 3109 / JCM 10099 / NBRC 100826 / MSB8).